Reading from the N-terminus, the 309-residue chain is uncharacterized protein (309 aa).

6 helical membrane-spanning segments follow: residues 28-48 (IIAL…IMKP), 73-93 (MMLN…VIGW), 113-133 (LIVI…LLPI), 157-177 (ITAF…YFHS), 220-240 (FVVI…AALF), and 259-279 (IFAV…ILIL).

Its subcellular location is the cell membrane. This is an uncharacterized protein from Bacillus subtilis (strain 168).